Reading from the N-terminus, the 225-residue chain is Ribonuclease 3 (225 aa).

The region spanning 7 to 132 (MKAFEARLGY…VIAAVYRDGG (126 aa)) is the RNase III domain. Mg(2+) is bound at residue Glu-45. Asp-49 is a catalytic residue. Asp-118 and Glu-121 together coordinate Mg(2+). Glu-121 is a catalytic residue. The DRBM domain occupies 157–225 (DAKTALQEWA…AARKLLDSLD (69 aa)).

It belongs to the ribonuclease III family. As to quaternary structure, homodimer. The cofactor is Mg(2+).

It is found in the cytoplasm. It catalyses the reaction Endonucleolytic cleavage to 5'-phosphomonoester.. In terms of biological role, digests double-stranded RNA. Involved in the processing of primary rRNA transcript to yield the immediate precursors to the large and small rRNAs (23S and 16S). Processes some mRNAs, and tRNAs when they are encoded in the rRNA operon. Processes pre-crRNA and tracrRNA of type II CRISPR loci if present in the organism. This is Ribonuclease 3 from Ruegeria pomeroyi (strain ATCC 700808 / DSM 15171 / DSS-3) (Silicibacter pomeroyi).